The chain runs to 526 residues: AAA ATPase forming ring-shaped complexes (526 aa).

The span at 1 to 18 shows a compositional bias: polar residues; the sequence is MGDMASSTDPAAHNSFSD. A disordered region spans residues 1–20; the sequence is MGDMASSTDPAAHNSFSDFN. A coiled-coil region spans residues 20 to 59; that stretch reads NREEMTRLADNVRSLQRTNQDLSARNTKLAEMLKSSRDKL. 257–262 contributes to the ATP binding site; that stretch reads GCGKTL.

It belongs to the AAA ATPase family. Homohexamer. Assembles into a hexameric ring structure.

The protein is AAA ATPase forming ring-shaped complexes of Corynebacterium efficiens (strain DSM 44549 / YS-314 / AJ 12310 / JCM 11189 / NBRC 100395).